Consider the following 327-residue polypeptide: Phenylalanine--tRNA ligase alpha subunit (327 aa).

Glutamate 252 contributes to the Mg(2+) binding site.

The protein belongs to the class-II aminoacyl-tRNA synthetase family. Phe-tRNA synthetase alpha subunit type 1 subfamily. As to quaternary structure, tetramer of two alpha and two beta subunits. Mg(2+) is required as a cofactor.

It localises to the cytoplasm. It carries out the reaction tRNA(Phe) + L-phenylalanine + ATP = L-phenylalanyl-tRNA(Phe) + AMP + diphosphate + H(+). The chain is Phenylalanine--tRNA ligase alpha subunit from Pectobacterium atrosepticum (strain SCRI 1043 / ATCC BAA-672) (Erwinia carotovora subsp. atroseptica).